The primary structure comprises 319 residues: MVGEMETKEKPKPTPDYLMQLMNDKKLMSSLPNFCGIFNHLERLLDEEIGRVRKDMYNDTLNGSTDKRTSELPDAVGPIAQLQEKLYVPVKEYPDFNFVGRILGPRGLTAKQLEAETGCKIMVRGKGSMRDKKKEEQNRGKPNWEHLNEDLHVLITVEDSQNRAEIKLKRAVEEVKKLLVPAAEGEDSLKKMQLMELAILNGTYRDANIKSPALAFSLAATAQAPRIMTGPTPVMPNAALRTPAPTAPTLMPLIRQIQTSALMPTGTPHPTATLLPQTPESGIIYAPYDYPYALAPATSILEYPIDSSGVLGMAFPTKG.

A KH domain is found at 87–153 (YVPVKEYPDF…WEHLNEDLHV (67 aa)). The short motif at 276 to 279 (PQTP) is the SH3-binding element.

It belongs to the quaking family. Homodimer; does not require RNA to homodimerize.

It is found in the cytoplasm. The protein resides in the nucleus. Its function is as follows. RNA reader protein, which recognizes and binds specific RNAs, thereby regulating RNA metabolic processes, such as pre-mRNA splicing, circular RNA (circRNA) formation, mRNA export, mRNA stability and/or translation. Involved in various cellular processes, such as mRNA storage into stress granules, apoptosis, interferon response, glial cell fate and development. Binds to the 5'-NACUAAY-N(1,20)-UAAY-3' RNA core sequence. Acts as a mRNA modification reader that specifically recognizes and binds mRNA transcripts modified by internal N(7)-methylguanine (m7G). Promotes the formation of circular RNAs (circRNAs): acts by binding to sites flanking circRNA-forming exons. CircRNAs are produced by back-splicing circularization of pre-mRNAs. Required to protect and promote stability of mRNAs which promotes oligodendrocyte differentiation. Acts as an important regulator of muscle development: required during early skeletal myofibril formation by regulating the accumulation of the muscle-specific tropomyosin-3 (tpm3) transcripts. The polypeptide is Protein quaking-B (qki2) (Danio rerio (Zebrafish)).